Consider the following 198-residue polypeptide: Protein RD3-like (198 aa).

A coiled-coil region spans residues 28 to 57 (KTLLRELKWHLKERERLIQEIENEQKVKKT). The tract at residues 133-168 (GSEQEDLEDSGSMDCSAPSVIQGDSSKRADKDEIPT) is disordered. Residues 157 to 166 (SSKRADKDEI) show a composition bias toward basic and acidic residues.

In Homo sapiens (Human), this protein is Protein RD3-like (RD3L).